A 236-amino-acid chain; its full sequence is N-alpha-acetyltransferase 40 (236 aa).

Gly-2 carries the N-myristoyl glycine lipid modification. The N-acetyltransferase domain occupies 63-217; sequence SDLDQKTIDW…DCTYEILSKR (155 aa). Residues Tyr-85, 127–129, and Tyr-138 each bind substrate; that span reads DVE. Acetyl-CoA-binding positions include 140 to 142 and 148 to 153; these read VQL and RKGVGK. Thr-174 is a substrate binding site. Position 179 (Asn-179) interacts with acetyl-CoA. Residue Tyr-211 coordinates substrate.

Belongs to the acetyltransferase family. NAA40 subfamily.

The protein resides in the cytoplasm. The protein localises to the nucleus. It catalyses the reaction N-terminal L-seryl-[histone H4] + acetyl-CoA = N-terminal N(alpha)-acetyl-L-seryl-[histone H4] + CoA + H(+). The enzyme catalyses N-terminal L-seryl-[histone H2A] + acetyl-CoA = N-terminal N(alpha)-acetyl-L-seryl-[histone H2A] + CoA + H(+). Its function is as follows. N-alpha-acetyltransferase that specifically mediates the acetylation of the N-terminal residues of histones H4 and H2A. In contrast to other N-alpha-acetyltransferase, has a very specific selectivity for histones H4 and H2A N-terminus and specifically recognizes the 'Ser-Gly-Arg-Gly sequence'. The chain is N-alpha-acetyltransferase 40 (naa40) from Xenopus laevis (African clawed frog).